The primary structure comprises 86 residues: Antimicrobial peptide 2 (86 aa).

Positions 1–25 (MVNMKCVALIVIVMMAFMMVDPSMG) are cleaved as a signal peptide. 3 disulfide bridges follow: Cys-29-Cys-40, Cys-34-Cys-46, and Cys-39-Cys-53. The region spanning 29-53 (CVRGRCPSGMCCSQFGYCGKGPKYC) is the Chitin-binding type-1 domain. A propeptide spans 56–86 (ASTTVDHQADVAATKTAKNPTDAKLAGAGSP) (removed in mature form).

In terms of assembly, homodimer.

Chitin-binding protein with a defensive function against numerous chitin containing fungal pathogens. It is also a potent inhibitor of Gram-positive bacteria. This is Antimicrobial peptide 2 from Amaranthus caudatus (Love-lies-bleeding).